Here is a 263-residue protein sequence, read N- to C-terminus: Cell division protein DivIB (263 aa).

The Cytoplasmic portion of the chain corresponds to 1-32 (MNPGQDREKIVNIEERIPKIKEQRKQKANRRL). Residues 33 to 53 (ISFIMLFFIMVLIIVYLQTPI) traverse the membrane as a helical segment. The segment at 51-123 (TPISKVSTIS…NKINIAIEEY (73 aa)) is alpha. The 70-residue stretch at 54–123 (SKVSTISVTG…NKINIAIEEY (70 aa)) folds into the POTRA domain. Residues 54–263 (SKVSTISVTG…DKAAKKEDEN (210 aa)) are Extracellular-facing. Positions 124–251 (KAIAYLEKDD…EVATYFEEFG (128 aa)) are beta. Residues 229-263 (SQLSSNKKGIIHLEVATYFEEFGKNDKAAKKEDEN) form a gamma region.

The protein belongs to the FtsQ/DivIB family. DivIB subfamily. In terms of assembly, interacts with FtsL, DivIC and PBP-2B.

It is found in the cell membrane. In terms of biological role, cell division protein that may be involved in stabilizing or promoting the assembly of the division complex. Plays an essential role in division at high temperatures, maybe by protecting FtsL from degradation or by promoting formation of the FtsL-DivIC complex. May modulate the transpeptidase activity of PBP-2B. Also required for efficient sporulation at all temperatures. Could be directly involved in the engulfment process or be required to form a sporulation septum competent for engulfment. Influences the Spo0J/Soj system of chromosome segregation. In Bacillus subtilis (strain 168), this protein is Cell division protein DivIB.